The chain runs to 340 residues: Fructose-1,6-bisphosphatase class 1 (340 aa).

Glutamate 107, aspartate 126, leucine 128, and aspartate 129 together coordinate Mg(2+). Asparagine 215 contacts substrate. Glutamate 287 serves as a coordination point for Mg(2+).

It belongs to the FBPase class 1 family. As to quaternary structure, homotetramer. Requires Mg(2+) as cofactor.

It localises to the cytoplasm. It carries out the reaction beta-D-fructose 1,6-bisphosphate + H2O = beta-D-fructose 6-phosphate + phosphate. Its pathway is carbohydrate biosynthesis; gluconeogenesis. This chain is Fructose-1,6-bisphosphatase class 1, found in Brucella suis biovar 1 (strain 1330).